The primary structure comprises 126 residues: uncharacterized protein (126 aa).

The next 2 helical transmembrane spans lie at 40–57 (IDKW…VSFF) and 72–94 (ILIA…ILGG).

It localises to the cell membrane. This is an uncharacterized protein from Pasteurella multocida (strain Pm70).